The primary structure comprises 111 residues: X antigen family member 2 (111 aa).

Disordered stretches follow at residues 1–61 (MSWR…AAEI) and 77–111 (KTGD…KSQV). The span at 86 to 111 (TDVKGKILPKAEHFKMPEAGEGKSQV) shows a compositional bias: basic and acidic residues.

The protein belongs to the GAGE family.

In Homo sapiens (Human), this protein is X antigen family member 2 (XAGE2).